The primary structure comprises 275 residues: Large ribosomal subunit protein uL2 (275 aa).

Residues 224-275 are disordered; that stretch reads AMNPVDHPHGGGEAKAGQGNPHPVTPWGVPTKGYKTRKNKRTQQFIVRDRRG.

It belongs to the universal ribosomal protein uL2 family. Part of the 50S ribosomal subunit. Forms a bridge to the 30S subunit in the 70S ribosome.

Its function is as follows. One of the primary rRNA binding proteins. Required for association of the 30S and 50S subunits to form the 70S ribosome, for tRNA binding and peptide bond formation. It has been suggested to have peptidyltransferase activity; this is somewhat controversial. Makes several contacts with the 16S rRNA in the 70S ribosome. This Xanthomonas oryzae pv. oryzae (strain MAFF 311018) protein is Large ribosomal subunit protein uL2.